Here is a 37-residue protein sequence, read N- to C-terminus: Large ribosomal subunit protein bL36 (37 aa).

This sequence belongs to the bacterial ribosomal protein bL36 family.

In Trichlorobacter lovleyi (strain ATCC BAA-1151 / DSM 17278 / SZ) (Geobacter lovleyi), this protein is Large ribosomal subunit protein bL36.